The following is a 431-amino-acid chain: Putative malic acid transport protein (431 aa).

10 consecutive transmembrane segments (helical) span residues 30–50 (FTWAWFASAMGTGGIGMVTSL), 62–82 (GKIIFIFQLSILTLYICCITF), 101–121 (VLFMPTALLAIATSISNLYPY), 136–156 (ILYWIFVAVACIFVISLFYSL), 167–187 (IIPALVLPIFPCMICGVIASA), 201–221 (VVAGIAFQGLGFWIYIIVYAV), 239–259 (GMFILVSPPSFTGLTLLDLAF), 284–304 (FMALFMIGLGIFNFCLAFVSV), 318–338 (VSWFAMIFANVGLVMDVQELG), and 346–366 (VCIVGQVCGVTITIVWIILIL). Residues 402 to 424 (EEEKDEAERSKRKAEESDGKTTR) are compositionally biased toward basic and acidic residues. The interval 402–431 (EEEKDEAERSKRKAEESDGKTTRELTSGGL) is disordered.

Belongs to the tellurite-resistance/dicarboxylate transporter (TDT) family.

The protein resides in the membrane. The polypeptide is Putative malic acid transport protein (Schizosaccharomyces pombe (strain 972 / ATCC 24843) (Fission yeast)).